Here is a 118-residue protein sequence, read N- to C-terminus: Protein TusC (118 aa).

The protein belongs to the DsrF/TusC family. As to quaternary structure, heterohexamer, formed by a dimer of trimers. The hexameric TusBCD complex contains 2 copies each of TusB, TusC and TusD. The TusBCD complex interacts with TusE.

It is found in the cytoplasm. Part of a sulfur-relay system required for 2-thiolation of 5-methylaminomethyl-2-thiouridine (mnm(5)s(2)U) at tRNA wobble positions. This chain is Protein TusC, found in Salmonella gallinarum (strain 287/91 / NCTC 13346).